A 330-amino-acid chain; its full sequence is T-cell leukemia homeobox protein 1 (330 aa).

Positions 186-207 (DRFTGHPYQNRTPPKKKKPRTS) are disordered. The segment at residues 201–260 (KKKPRTSFTRLQICELEKRFHRQKYLASAERAALAKALKMTDAQVKTWFQNRRTKWRRQT) is a DNA-binding region (homeobox). Lys-236 is subject to N6-acetyllysine.

Interacts with MEIS1, MEIS2, PBX1, PBX2 and PBX3.

The protein resides in the nucleus. Controls the genesis of the spleen. Binds to the DNA sequence 5'-GGCGGTAAGTGG-3'. The sequence is that of T-cell leukemia homeobox protein 1 (TLX1) from Homo sapiens (Human).